We begin with the raw amino-acid sequence, 395 residues long: Na(+)/H(+) antiporter NhaA (395 aa).

The next 11 membrane-spanning stretches (helical) occupy residues 11–31 (FQLE…ALII), 61–81 (LLLW…GLEV), 96–116 (IVLP…IYWF), 127–147 (GWAI…ALLG), 156–176 (LFLM…IAIF), 179–199 (GELS…LVAM), 215–237 (LILW…TLAF), 262–282 (VAYG…LSGV), 295–315 (IAVG…WLAV), 334–354 (VAIL…LAFV), and 366–386 (MGIL…TAAA).

The protein belongs to the NhaA Na(+)/H(+) (TC 2.A.33) antiporter family.

Its subcellular location is the cell inner membrane. The enzyme catalyses Na(+)(in) + 2 H(+)(out) = Na(+)(out) + 2 H(+)(in). Na(+)/H(+) antiporter that extrudes sodium in exchange for external protons. In Pseudomonas fluorescens (strain Pf0-1), this protein is Na(+)/H(+) antiporter NhaA.